The chain runs to 461 residues: CBL-interacting protein kinase 5 (461 aa).

In terms of domain architecture, Protein kinase spans 12–266 (YELGRMLGQG…VEKLVEHPWF (255 aa)). ATP is bound by residues 18–26 (LGQGTFAKV) and lysine 41. Aspartate 134 functions as the Proton acceptor in the catalytic mechanism. Residues 152–181 (DFGLSAFKECQKQDGLLHTTCGTPAYVAPE) form an activation loop region. The NAF domain occupies 300–334 (EGKAKEPASSLKPVSLNAFDIISLSKGFDLSGLFE). The interval 340–369 (KADSRFMTQKPASAIVSKLEQIAETESFKV) is PPI. Residues 440–461 (HPSLAQSSTLTQSSKSISRHAI) form a disordered region. Positions 442 to 455 (SLAQSSTLTQSSKS) are enriched in low complexity.

It belongs to the protein kinase superfamily. CAMK Ser/Thr protein kinase family. SNF1 subfamily. Mn(2+) is required as a cofactor.

It catalyses the reaction L-seryl-[protein] + ATP = O-phospho-L-seryl-[protein] + ADP + H(+). The enzyme catalyses L-threonyl-[protein] + ATP = O-phospho-L-threonyl-[protein] + ADP + H(+). Functionally, CIPK serine-threonine protein kinases interact with CBL proteins. Binding of a CBL protein to the regulatory NAF domain of CIPK protein lead to the activation of the kinase in a calcium-dependent manner. This Oryza sativa subsp. japonica (Rice) protein is CBL-interacting protein kinase 5 (CIPK5).